Here is an 836-residue protein sequence, read N- to C-terminus: Zinc fingers and homeoboxes protein 2 (836 aa).

The tract at residues 24 to 58 (LEEADRAKDKGLGVPPSDVSKERWAAEPEPSSKES) is disordered. The interval 27–77 (ADRAKDKGLGVPPSDVSKERWAAEPEPSSKESEVVEVRSVGESQSKKLQGG) is interaction with EFNB1. Basic and acidic residues predominate over residues 42–58 (VSKERWAAEPEPSSKES). 2 consecutive C2H2-type zinc fingers follow at residues 78 to 101 (YECK…DMQH) and 110 to 133 (YVCA…SKFH). The segment at 168–210 (SAPGSSDNDPGVSVGKTATVKTGKQKADAKKVPKKPDEAAPDN) is disordered. A compositionally biased stretch (basic and acidic residues) spans 192-210 (QKADAKKVPKKPDEAAPDN). Positions 195–358 (DAKKVPKKPD…PAQLTPTKVS (164 aa)) are required for homodimerization. 4 DNA-binding regions (homeobox) span residues 263 to 324 (NTTK…WSPE), 439 to 501 (TPAS…IVHI), 530 to 591 (AQKF…EQAV), and 628 to 690 (SPSS…TLSW). The tract at residues 263–446 (NTTKYNSALD…PLTPASDRKK (184 aa)) is required for repressor activity. Positions 263–497 (NTTKYNSALD…SDHRYRCQRG (235 aa)) are required for interaction with NFYA. Residues 317–446 (HGISWSPEEV…PLTPASDRKK (130 aa)) form a required for nuclear localization region. Positions 404–442 (GQKRPLVTPQAAPEPKRPHIAQVPEPPPKVANTPLTPAS) are disordered. A Glycyl lysine isopeptide (Lys-Gly) (interchain with G-Cter in SUMO2) cross-link involves residue Lys-455. Composition is skewed to basic and acidic residues over residues 700 to 709 (SDDHGHDVAS) and 730 to 746 (YAKD…EKLV). The disordered stretch occupies residues 700–836 (SDDHGHDVAS…DSTPAEAGQA (137 aa)). 2 positions are modified to phosphoserine: Ser-824 and Ser-826.

Belongs to the ZHX family. As to quaternary structure, homodimer (via homeobox domain 1). Heterodimer with ZHX1 (via homeobox domain 1). Heterodimer with ZHX3 (via homeobox domain 1). Heterodimerization with ZHX1 is not necessary for repressor activity. Interacts (via homeobox domain) with NFYA (via N-terminus). Interacts with EFNB1 intracellular domain peptide; the interaction enhances ZHX2 transcriptional repression activity.

It localises to the nucleus. Functionally, acts as a transcriptional repressor. Represses the promoter activity of the CDC25C gene stimulated by NFYA. May play a role in retinal development where it regulates the composition of bipolar cell populations, by promoting differentiation of bipolar OFF-type cells. In the brain, may promote maintenance and suppress differentiation of neural progenitor cells in the developing cortex. The polypeptide is Zinc fingers and homeoboxes protein 2 (Zhx2) (Rattus norvegicus (Rat)).